Reading from the N-terminus, the 226-residue chain is Large ribosomal subunit protein uL1 (226 aa).

The protein belongs to the universal ribosomal protein uL1 family. Part of the 50S ribosomal subunit.

Its function is as follows. Binds directly to 23S rRNA. The L1 stalk is quite mobile in the ribosome, and is involved in E site tRNA release. Functionally, protein L1 is also a translational repressor protein, it controls the translation of the L11 operon by binding to its mRNA. The sequence is that of Large ribosomal subunit protein uL1 from Mycoplasma genitalium (strain ATCC 33530 / DSM 19775 / NCTC 10195 / G37) (Mycoplasmoides genitalium).